The chain runs to 346 residues: UDP-3-O-acylglucosamine N-acyltransferase (346 aa).

Histidine 253 functions as the Proton acceptor in the catalytic mechanism.

This sequence belongs to the transferase hexapeptide repeat family. LpxD subfamily. In terms of assembly, homotrimer.

It catalyses the reaction a UDP-3-O-[(3R)-3-hydroxyacyl]-alpha-D-glucosamine + a (3R)-hydroxyacyl-[ACP] = a UDP-2-N,3-O-bis[(3R)-3-hydroxyacyl]-alpha-D-glucosamine + holo-[ACP] + H(+). It functions in the pathway bacterial outer membrane biogenesis; LPS lipid A biosynthesis. Catalyzes the N-acylation of UDP-3-O-acylglucosamine using 3-hydroxyacyl-ACP as the acyl donor. Is involved in the biosynthesis of lipid A, a phosphorylated glycolipid that anchors the lipopolysaccharide to the outer membrane of the cell. The polypeptide is UDP-3-O-acylglucosamine N-acyltransferase (Rickettsia akari (strain Hartford)).